The primary structure comprises 104 residues: MITMDCLREVGDDLLVNIEVSPASGKFGIPSYNEWRKRIEVKIHSPPQKGKANREIIKEFSETFGRDVEIVSGQKSRQKTIRIQGMGRDLFLKLVSEKFGLEIP.

This sequence belongs to the UPF0235 family.

In Methanothermobacter thermautotrophicus (strain ATCC 29096 / DSM 1053 / JCM 10044 / NBRC 100330 / Delta H) (Methanobacterium thermoautotrophicum), this protein is UPF0235 protein MTH_637.